Here is a 351-residue protein sequence, read N- to C-terminus: Tetraacyldisaccharide 4'-kinase (351 aa).

47-54 (KAGGTGKT) provides a ligand contact to ATP.

It belongs to the LpxK family.

It carries out the reaction a lipid A disaccharide + ATP = a lipid IVA + ADP + H(+). It functions in the pathway glycolipid biosynthesis; lipid IV(A) biosynthesis; lipid IV(A) from (3R)-3-hydroxytetradecanoyl-[acyl-carrier-protein] and UDP-N-acetyl-alpha-D-glucosamine: step 6/6. In terms of biological role, transfers the gamma-phosphate of ATP to the 4'-position of a tetraacyldisaccharide 1-phosphate intermediate (termed DS-1-P) to form tetraacyldisaccharide 1,4'-bis-phosphate (lipid IVA). This Cytophaga hutchinsonii (strain ATCC 33406 / DSM 1761 / CIP 103989 / NBRC 15051 / NCIMB 9469 / D465) protein is Tetraacyldisaccharide 4'-kinase.